The primary structure comprises 431 residues: MTTEFMLVTLSNQSADARWGEKALLSTGAEGMTIHLTGKDKLGSIQRAARKIDGQGIKNVKLAGDGWDLENSWAFWQGFRGPKGKRSVEWAPLPAAESKELEQRLKIVDWVRDTINMSAEELGPEQLATRAVDLMCDIGCEAVSYRITKGEDLREQNYAGIHTVGRGSDRSPVLLALDFNPTGNPEAPVFACLVGKGITFDTGGYSLKQSAFMDSMKADMGGAATITGALALAAARGLKQRVKLYLCCADNMVSGNAFKLGDIIRYRNGKTVEVMNTDAEGRLVLADGLIDASAQNPQLIIDCATLTGAAKTAVGNDYHALFSFDDALAQELLASAAAEQEPFWRLPLAEFHRSQLPSNFAELNNVAGPAYTAGASTAAAFLSHFVTNYQQGWLHIDCSATYRKGAVDQWSAGATGLGVRALANLLLSKAR.

Mn(2+) contacts are provided by Lys196 and Asp201. Lys208 is a catalytic residue. Asp219, Asp278, and Glu280 together coordinate Mn(2+). Arg282 is an active-site residue.

It belongs to the peptidase M17 family. As to quaternary structure, homohexamer. It depends on Mn(2+) as a cofactor.

The protein localises to the cytoplasm. The catalysed reaction is Release of an N-terminal amino acid, Xaa, from a peptide or arylamide. Xaa is preferably Glu or Asp but may be other amino acids, including Leu, Met, His, Cys and Gln.. In terms of biological role, probably plays an important role in intracellular peptide degradation. The sequence is that of Peptidase B from Serratia proteamaculans (strain 568).